The chain runs to 177 residues: Ubiquinol-cytochrome c reductase iron-sulfur subunit (177 aa).

A helical membrane pass occupies residues 18–38 (IVLTASSVAAVGAACAFWPII). A Rieske domain is found at 88 to 175 (ARAVKMSELI…YIFISDKKIR (88 aa)). 4 residues coordinate [2Fe-2S] cluster: C120, H122, C139, and H142. A disulfide bond links C125 and C141.

The protein belongs to the Rieske iron-sulfur protein family. In terms of assembly, the main subunits of complex b-c1 are: cytochrome b, cytochrome c1 and the Rieske protein. It depends on [2Fe-2S] cluster as a cofactor.

It localises to the cell membrane. The catalysed reaction is a quinol + 2 Fe(III)-[cytochrome c](out) = a quinone + 2 Fe(II)-[cytochrome c](out) + 2 H(+)(out). Functionally, component of the ubiquinol-cytochrome c reductase complex (complex III or cytochrome b-c1 complex), which is a respiratory chain that generates an electrochemical potential coupled to ATP synthesis. This Rickettsia prowazekii (strain Madrid E) protein is Ubiquinol-cytochrome c reductase iron-sulfur subunit (petA).